A 538-amino-acid polypeptide reads, in one-letter code: Phosphoenolpyruvate carboxykinase (ATP) (538 aa).

Residues Arg64, Tyr205, and Lys211 each coordinate substrate. Residues Lys211, His230, and 246–254 contribute to the ATP site; that span reads GLSGTGKTT. Mn(2+)-binding residues include Lys211 and His230. Residue Asp267 coordinates Mn(2+). ATP-binding positions include Glu295, Arg331, 447–448, and Thr453; that span reads RI. Arg331 is a substrate binding site.

The protein belongs to the phosphoenolpyruvate carboxykinase (ATP) family. As to quaternary structure, monomer. It depends on Mn(2+) as a cofactor.

It is found in the cytoplasm. The enzyme catalyses oxaloacetate + ATP = phosphoenolpyruvate + ADP + CO2. It participates in carbohydrate biosynthesis; gluconeogenesis. In terms of biological role, involved in the gluconeogenesis. Catalyzes the conversion of oxaloacetate (OAA) to phosphoenolpyruvate (PEP) through direct phosphoryl transfer between the nucleoside triphosphate and OAA. The sequence is that of Phosphoenolpyruvate carboxykinase (ATP) from Mannheimia succiniciproducens (strain KCTC 0769BP / MBEL55E).